We begin with the raw amino-acid sequence, 378 residues long: Carbamoyl phosphate synthase small chain (378 aa).

The segment at Met-1 to Glu-189 is CPSase. Residues Ser-47, Gly-241, and Gly-243 each coordinate L-glutamine. One can recognise a Glutamine amidotransferase type-1 domain in the interval His-193 to Arg-378. Cys-269 functions as the Nucleophile in the catalytic mechanism. Residues Leu-270, Gln-273, Asn-311, Gly-313, and Phe-314 each coordinate L-glutamine. Active-site residues include His-353 and Glu-355.

The protein belongs to the CarA family. Composed of two chains; the small (or glutamine) chain promotes the hydrolysis of glutamine to ammonia, which is used by the large (or ammonia) chain to synthesize carbamoyl phosphate. Tetramer of heterodimers (alpha,beta)4.

The enzyme catalyses hydrogencarbonate + L-glutamine + 2 ATP + H2O = carbamoyl phosphate + L-glutamate + 2 ADP + phosphate + 2 H(+). It catalyses the reaction L-glutamine + H2O = L-glutamate + NH4(+). The protein operates within amino-acid biosynthesis; L-arginine biosynthesis; carbamoyl phosphate from bicarbonate: step 1/1. Its pathway is pyrimidine metabolism; UMP biosynthesis via de novo pathway; (S)-dihydroorotate from bicarbonate: step 1/3. Small subunit of the glutamine-dependent carbamoyl phosphate synthetase (CPSase). CPSase catalyzes the formation of carbamoyl phosphate from the ammonia moiety of glutamine, carbonate, and phosphate donated by ATP, constituting the first step of 2 biosynthetic pathways, one leading to arginine and/or urea and the other to pyrimidine nucleotides. The small subunit (glutamine amidotransferase) binds and cleaves glutamine to supply the large subunit with the substrate ammonia. The chain is Carbamoyl phosphate synthase small chain from Pseudomonas syringae pv. tomato (strain ATCC BAA-871 / DC3000).